The primary structure comprises 2002 residues: [F-actin]-monooxygenase MICAL3 (2002 aa).

The tract at residues 2-494 is monooxygenase domain; the sequence is EERKHETMNP…RHLYDTGETK (493 aa). FAD contacts are provided by residues C97, 116–118, 123–125, F183, Y298, and D398; these read EKR and RNN. Residues 518–624 enclose the Calponin-homology (CH) domain; sequence VARSSKLLGW…YLTQFYEMFK (107 aa). The residue at position 649 (S649) is a Phosphoserine. Positions 658–706 are disordered; it reads GQTISRKRSPKDKKEKDLDGAGKRRKTSQSEEEEAPRGHRGERPTLVST. Residues 663–684 carry the Nuclear localization signal motif; the sequence is RKRSPKDKKEKDLDGAGKRRKT. Positions 669-679 are enriched in basic and acidic residues; that stretch reads DKKEKDLDGAG. Phosphoserine is present on residues S685 and S687. Positions 762-824 constitute an LIM zinc-binding domain; sequence DTCYFCQKRV…KPHYCYRLSG (63 aa). Zn(2+)-binding residues include C764, C767, H785, C788, C791, C794, C814, and H817. The interval 835–883 is disordered; sequence PLSGKEAKGPLQDGATTDANGRANAVASSTERTPGSGVNGLEEPSIAKR. Residue T887 is modified to Phosphothreonine. 3 disordered regions span residues 907 to 1313, 1335 to 1776, and 1791 to 1821; these read QEVP…SPLA, RRSL…GKHR, and LSFSEDSDLSSDDVLEKSSQKSRREPRTYTE. Residues 938-950 are compositionally biased toward acidic residues; that stretch reads SEMEEEGEEEEEE. S977 bears the Phosphoserine mark. The segment covering 991–1017 has biased composition (acidic residues); sequence NEEEEEEEEEYEEEEEEDYDEEEEESS. The span at 1041–1054 shows a compositional bias: basic and acidic residues; the sequence is HWTHIREREEEERM. Over residues 1055-1066 the composition is skewed to low complexity; sequence APASESSASGAP. Over residues 1068–1102 the composition is skewed to acidic residues; that stretch reads DENDLEEDVDSEPAEIEGEAAEDGDPGDTGAELDD. A phosphoserine mark is found at S1134, S1143, S1160, and S1192. A compositionally biased stretch (polar residues) spans 1150-1163; the sequence is GPSQATSPIRSPQE. Residues 1191–1218 are compositionally biased toward basic and acidic residues; it reads KSPEERLFPEPLLPKEKPKADAPSDLKA. The segment covering 1239-1258 has biased composition (pro residues); it reads PGSPQPQPPVAASTPPPSPL. Polar residues-rich tracts occupy residues 1268 to 1280 and 1288 to 1302; these read TEATVPSPTQSPI and KTSTPLAPLPVQSQS. A Phosphoserine modification is found at S1274. Residue T1276 is modified to Phosphothreonine. A Phosphoserine modification is found at S1278. Residues S1310 and S1337 each carry the phosphoserine modification. A Phosphothreonine modification is found at T1341. 2 positions are modified to phosphoserine: S1371 and S1384. A compositionally biased stretch (basic and acidic residues) spans 1407 to 1422; it reads PSDRELRSAQEERREL. The span at 1423–1435 shows a compositional bias: low complexity; that stretch reads SSSSGLGLHGSSS. Position 1433 is a phosphoserine (S1433). Over residues 1436–1451 the composition is skewed to polar residues; that stretch reads NMKTLGSQSFNTSDSA. Phosphothreonine is present on T1454. The span at 1456–1467 shows a compositional bias: pro residues; the sequence is PSSPPPPPPPGE. A compositionally biased stretch (acidic residues) spans 1516 to 1530; sequence SVEEIPFADDVEDTY. Residues 1588–1604 are compositionally biased toward basic and acidic residues; sequence EAKELAEERMRAREKSV. S1649 carries the phosphoserine modification. Position 1651 is a phosphothreonine (T1651). Basic and acidic residues predominate over residues 1657–1668; sequence GSEEPTLKHEAT. Positions 1674–1694 are enriched in low complexity; sequence SPPSDSGGPDGSFTSSEGSSG. The span at 1695 to 1713 shows a compositional bias: basic residues; sequence KSKKRSSLFSPRRNKKEKK. Phosphoserine occurs at positions 1701 and 1704. Positions 1760–1769 are enriched in polar residues; that stretch reads CPSTPSSGAT. Residues 1804–1820 are compositionally biased toward basic and acidic residues; the sequence is VLEKSSQKSRREPRTYT. Positions 1821 to 1992 form a coiled coil; it reads EEELNAKLTR…EEDKDLEAAM (172 aa). The region spanning 1841-1990 is the bMERB domain; the sequence is KQEELKRLHR…EREEDKDLEA (150 aa). S1912 carries the phosphoserine modification.

This sequence belongs to the Mical family. As to quaternary structure, interacts with RAB1B, RAB8A, RAB10, RAB13 and RAB15 (in their GTP-bound forms); binding to RAB1B is of low affinity compared to other Rab proteins; at least in case of RAB8A can bind 2 molecules of RAB8A simultaneously through a high and a low affinity binding site, respectively. Interacts with ERC1 and RAB8A; may bridge ERC1 with RAB8A. Interacts with KIF23 and ERC1; enhances the interaction between KIF23 and ERC1. Interacts with NINL isoform 2. Requires FAD as cofactor. As to expression, ubiquitous.

The protein resides in the cytoplasm. Its subcellular location is the cell cortex. It localises to the cytoskeleton. The protein localises to the nucleus. It is found in the midbody. The protein resides in the spindle. Its subcellular location is the cilium basal body. It catalyses the reaction L-methionyl-[F-actin] + NADPH + O2 + H(+) = L-methionyl-(R)-S-oxide-[F-actin] + NADP(+) + H2O. Functionally, monooxygenase that promotes depolymerization of F-actin by mediating oxidation of specific methionine residues on actin to form methionine-sulfoxide, resulting in actin filament disassembly and preventing repolymerization. In the absence of actin, it also functions as a NADPH oxidase producing H(2)O(2). Seems to act as Rab effector protein and plays a role in vesicle trafficking. Involved in exocytic vesicles tethering and fusion: the monooxygenase activity is required for this process and implicates RAB8A associated with exocytotic vesicles. Required for cytokinesis. Contributes to stabilization and/or maturation of the intercellular bridge independently of its monooxygenase activity. Promotes recruitment of Rab8 and ERC1 to the intercellular bridge, and together these proteins are proposed to function in timely abscission. The sequence is that of [F-actin]-monooxygenase MICAL3 (MICAL3) from Homo sapiens (Human).